We begin with the raw amino-acid sequence, 135 residues long: Large ribosomal subunit protein eL32 (135 aa).

Residue K9 forms a Glycyl lysine isopeptide (Lys-Gly) (interchain with G-Cter in SUMO2) linkage. N6-succinyllysine is present on K50. S62 bears the Phosphoserine mark.

It belongs to the eukaryotic ribosomal protein eL32 family. In terms of assembly, component of the large ribosomal subunit.

The protein resides in the cytoplasm. In terms of biological role, component of the large ribosomal subunit. The ribosome is a large ribonucleoprotein complex responsible for the synthesis of proteins in the cell. The protein is Large ribosomal subunit protein eL32 (RPL32) of Oryctolagus cuniculus (Rabbit).